Reading from the N-terminus, the 181-residue chain is Cytidylate kinase (181 aa).

7–15 (GPPGSGTTS) lines the ATP pocket.

It belongs to the cytidylate kinase family. Type 2 subfamily.

Its subcellular location is the cytoplasm. It carries out the reaction CMP + ATP = CDP + ADP. The catalysed reaction is dCMP + ATP = dCDP + ADP. In Methanoculleus marisnigri (strain ATCC 35101 / DSM 1498 / JR1), this protein is Cytidylate kinase.